The following is a 414-amino-acid chain: Relaxin-3 receptor 2 (414 aa).

The Extracellular segment spans residues 1-43 (MATSNSSASLPTLFWVNGSGDSVLSTDGAAMPVQFLVLRIMVA). 2 N-linked (GlcNAc...) asparagine glycosylation sites follow: N5 and N17. Residues 44 to 64 (LAYGLVGIIGLLGNLAVLWVL) traverse the membrane as a helical segment. The Cytoplasmic portion of the chain corresponds to 65–77 (GNCGQRVPGLSSD). The chain crosses the membrane as a helical span at residues 78-98 (TFVFSLALADLGLALTLPFWA). The Extracellular segment spans residues 99 to 116 (TESAMDFHWPFGSALCKV). C114 and C191 are disulfide-bonded. The chain crosses the membrane as a helical span at residues 117–137 (VLTTTVLSIYASTFLITALSI). Residues 138–155 (ARYWVVAMAVGPGSHLSV) are Cytoplasmic-facing. The helical transmembrane segment at 156-176 (FWARVVTLAVWVAAALVTVPT) threads the bilayer. Topologically, residues 177 to 209 (AIFGAEVELWGVCLCLLRFPSRYWLGAYQLQRV) are extracellular. The helical transmembrane segment at 210 to 230 (VLAFIVPLGVITTSYLLLLAF) threads the bilayer. Topologically, residues 231–255 (LERQQRCRPRQWQDSRVVARSVRVL) are cytoplasmic. A helical membrane pass occupies residues 256–276 (VASFALCWVPNHVVTLWEILV). Over 277-293 (RFDLVPWDSTFYTFHTY) the chain is Extracellular. Residues 294–316 (ILPITTCLAHSNSCLNPVIYCLL) form a helical membrane-spanning segment. Residues 317 to 414 (RREPQQVLVS…SQAAVSPGEV (98 aa)) are Cytoplasmic-facing.

This sequence belongs to the G-protein coupled receptor 1 family. Detected only in bone marrow.

It localises to the cell membrane. High affinity receptor for INSL5. Also acts as a receptor for RLN3/relaxin-3, as well as bradykinin and kallidin. Binding of the ligand inhibit cAMP accumulation. The protein is Relaxin-3 receptor 2 (Rxfp4) of Mus musculus (Mouse).